The chain runs to 475 residues: Ribulose bisphosphate carboxylase large chain (475 aa).

A propeptide spanning residues 1 to 2 (MS) is cleaved from the precursor. Pro-3 carries the N-acetylproline modification. Lys-14 is modified (N6,N6,N6-trimethyllysine). Residues Asn-123 and Thr-173 each contribute to the substrate site. The active-site Proton acceptor is Lys-175. Lys-177 provides a ligand contact to substrate. Positions 201, 203, and 204 each coordinate Mg(2+). Lys-201 bears the N6-carboxylysine mark. The active-site Proton acceptor is the His-294. 3 residues coordinate substrate: Arg-295, His-327, and Ser-379.

It belongs to the RuBisCO large chain family. Type I subfamily. Heterohexadecamer of 8 large chains and 8 small chains; disulfide-linked. The disulfide link is formed within the large subunit homodimers. Requires Mg(2+) as cofactor. In terms of processing, the disulfide bond which can form in the large chain dimeric partners within the hexadecamer appears to be associated with oxidative stress and protein turnover.

It localises to the plastid. The protein localises to the chloroplast. It catalyses the reaction 2 (2R)-3-phosphoglycerate + 2 H(+) = D-ribulose 1,5-bisphosphate + CO2 + H2O. The catalysed reaction is D-ribulose 1,5-bisphosphate + O2 = 2-phosphoglycolate + (2R)-3-phosphoglycerate + 2 H(+). In terms of biological role, ruBisCO catalyzes two reactions: the carboxylation of D-ribulose 1,5-bisphosphate, the primary event in carbon dioxide fixation, as well as the oxidative fragmentation of the pentose substrate in the photorespiration process. Both reactions occur simultaneously and in competition at the same active site. This is Ribulose bisphosphate carboxylase large chain from Betula papyrifera (Paper birch).